The sequence spans 1024 residues: Protein tiptop (1024 aa).

Polar residues predominate over residues Glu20 to Ala35. 2 disordered regions span residues Glu20–Gly40 and Glu138–Asp215. Residues Asp159–Gln175 are compositionally biased toward acidic residues. Residues Phe317–His341 form a C2H2-type 1 zinc finger. The disordered stretch occupies residues Leu350–Glu392. Residues Thr368 to Ser391 show a composition bias toward low complexity. A C2H2-type 2 zinc finger spans residues Leu426–His450. 5 disordered regions span residues Gly466–Ser489, Ala519–Ser576, Ser712–Glu759, Phe786–Ala818, and Glu868–Thr891. Residues Val477–Ser489 show a composition bias toward low complexity. A C2H2-type 3 zinc finger spans residues Leu499–His523. A compositionally biased stretch (low complexity) spans Ser527–Ala537. Positions Lys543 to Pro558 are enriched in basic residues. Over residues Ser718–Ser729 the composition is skewed to low complexity. Positions Thr745–Thr755 are enriched in pro residues. Residues Phe786–Pro795 show a composition bias toward basic and acidic residues. Polar residues predominate over residues Arg796 to Arg808. Positions Ser874 to Thr891 are enriched in low complexity. The segment at Ile926–His949 adopts a C2H2-type 4 zinc-finger fold. Residues Ala954–Ser1004 are disordered. Positions Ser968–Gln990 are enriched in low complexity.

The protein belongs to the teashirt C2H2-type zinc-finger protein family. In terms of tissue distribution, expression in the Malpighian tubules (MTs) and stomatogastric nervous system starts at embryonic stage 10. At stage 11, expression in the head domain is initiated in the clypeolabrum in two bilaterally symmetric clusters of cells. At stage 12, expression appears in the central nervous system (CNS) of the trunk and the epidermis. The staining in the hindgut is maintained throughout embryogenesis. At stage 13, expression is present in elongating MTs. The anterior staining is detected in cells that invaginate into the stomodeum and by stage 15 onwards, in cells close to the pharynx. Also expressed in cells of the brain, the second constriction of the gut, the trunk epidermis, the anterior segments of the CNS (the three thoracic and the first two abdominal segments) and in the MTs. From stage 12 onwards, tsh and tio are colocalized in some cells.

It is found in the nucleus. Its function is as follows. Tiptop (tio) and teashirt (tsh) have, on the whole, common activities. Tio and tsh repress each other's expression and tsh has a crucial role for trunk patterning that is in part masked by ectopic expression of tiptop. Both genes share a common activity required for the activation of Ser and svb and the maintenance of en and wg. In Drosophila melanogaster (Fruit fly), this protein is Protein tiptop (tio).